The following is a 569-amino-acid chain: Urease subunit beta (569 aa).

One can recognise a Urease domain in the interval 131–569; that stretch reads GGIDTHIHFI…VSLGQLYCLF (439 aa). The Ni(2+) site is built by His136, His138, and Lys219. The residue at position 219 (Lys219) is an N6-carboxylysine. His221 serves as a coordination point for substrate. Ni(2+) contacts are provided by His248 and His274. The Proton donor role is filled by His322. Position 362 (Asp362) interacts with Ni(2+).

The protein belongs to the metallo-dependent hydrolases superfamily. Urease alpha subunit family. As to quaternary structure, heterohexamer of 3 UreA (alpha) and 3 UreB (beta) subunits. Ni cation is required as a cofactor. Carboxylation allows a single lysine to coordinate two nickel ions.

It localises to the cytoplasm. It catalyses the reaction urea + 2 H2O + H(+) = hydrogencarbonate + 2 NH4(+). It participates in nitrogen metabolism; urea degradation; CO(2) and NH(3) from urea (urease route): step 1/1. The protein is Urease subunit beta of Helicobacter hepaticus (strain ATCC 51449 / 3B1).